The chain runs to 201 residues: Protein Thf1 (201 aa).

A coiled-coil region spans residues 174–201 (IYKSSISKMEQAKELIQEQRIKDKKKTL).

It belongs to the THF1 family.

May be involved in photosynthetic membrane biogenesis. The sequence is that of Protein Thf1 from Prochlorococcus marinus (strain MIT 9312).